Consider the following 372-residue polypeptide: Glutamine synthetase (372 aa).

A GS beta-grasp domain is found at Ile-26–Gly-105. One can recognise a GS catalytic domain in the interval His-112–Leu-372.

This sequence belongs to the glutamine synthetase family. Homooctamer.

The protein resides in the cytoplasm. The enzyme catalyses L-glutamate + NH4(+) + ATP = L-glutamine + ADP + phosphate + H(+). The protein is Glutamine synthetase (GLN1) of Kluyveromyces lactis (strain ATCC 8585 / CBS 2359 / DSM 70799 / NBRC 1267 / NRRL Y-1140 / WM37) (Yeast).